Reading from the N-terminus, the 235-residue chain is Sugar fermentation stimulation protein homolog (235 aa).

The protein belongs to the SfsA family.

This is Sugar fermentation stimulation protein homolog from Maricaulis maris (strain MCS10) (Caulobacter maris).